We begin with the raw amino-acid sequence, 542 residues long: MPRYIFITGGVVSSLGKGLASAAIGALLQARGYKVRLRKLDPYLNVDPGTMSPYQHGECYVTDDGAEADLDLGHYERFTGVPASQADNITTGRIYSRIIERERRGDYLGATVQVIPHVTDQIKQFVLSDAGDVDFVLCEIGGTVGDIEGLPFFEAIRQLGQELGEGNAVFLHVTLLPFIKVAGEMKTKPTQHSVKELRSIGIQPDILLCRCEIPIPPGDKRKIGLFCNVKESAVIEGRDAASLYDVPLEYHSQGLDTEILRCFGIDDAPAPDLSRWQGISETIANPDGEVTIGVVGKYVGLLDAYKSLIEALAHGGIANGVKVKLKWLDSEQFEKDDPFEPLEDVHGVLVPGGFGERGVEGKIAAARFARERKVPFFGICYGMQMAVLEAARNLAGVTDAVSTEFSDTGESVIGLLTEWTRGNEVETRKVGDDMGGTMRLGAYPAVLKDGSKVREIYGQAHIEERHRHRYEVNVGYKDRLEACGLTFSGLSPDGVLPEIVEIEDHPWFIGVQFHPELKSRPFEPHPLFASFIAAALHQSRMV.

The segment at 1 to 265 (MPRYIFITGG…DTEILRCFGI (265 aa)) is amidoligase domain. Serine 13 provides a ligand contact to CTP. Residue serine 13 coordinates UTP. Position 14 to 19 (14 to 19 (SLGKGL)) interacts with ATP. An L-glutamine-binding site is contributed by tyrosine 54. Aspartate 71 contacts ATP. Aspartate 71 and glutamate 139 together coordinate Mg(2+). CTP-binding positions include 146–148 (DIE), 186–191 (KTKPTQ), and lysine 222. Residues 186–191 (KTKPTQ) and lysine 222 contribute to the UTP site. Residue 238-240 (RDA) coordinates ATP. Residues 298 to 541 (YVGLLDAYKS…IAAALHQSRM (244 aa)) form the Glutamine amidotransferase type-1 domain. Glycine 353 serves as a coordination point for L-glutamine. The active-site Nucleophile; for glutamine hydrolysis is cysteine 380. L-glutamine contacts are provided by residues 381 to 384 (YGMQ), glutamate 404, and arginine 469. Catalysis depends on residues histidine 514 and glutamate 516.

This sequence belongs to the CTP synthase family. Homotetramer.

It carries out the reaction UTP + L-glutamine + ATP + H2O = CTP + L-glutamate + ADP + phosphate + 2 H(+). It catalyses the reaction L-glutamine + H2O = L-glutamate + NH4(+). The enzyme catalyses UTP + NH4(+) + ATP = CTP + ADP + phosphate + 2 H(+). The protein operates within pyrimidine metabolism; CTP biosynthesis via de novo pathway; CTP from UDP: step 2/2. With respect to regulation, allosterically activated by GTP, when glutamine is the substrate; GTP has no effect on the reaction when ammonia is the substrate. The allosteric effector GTP functions by stabilizing the protein conformation that binds the tetrahedral intermediate(s) formed during glutamine hydrolysis. Inhibited by the product CTP, via allosteric rather than competitive inhibition. Catalyzes the ATP-dependent amination of UTP to CTP with either L-glutamine or ammonia as the source of nitrogen. Regulates intracellular CTP levels through interactions with the four ribonucleotide triphosphates. This is CTP synthase from Maricaulis maris (strain MCS10) (Caulobacter maris).